The chain runs to 161 residues: Crossover junction endodeoxyribonuclease RuvC (161 aa).

Catalysis depends on residues aspartate 9, glutamate 72, and aspartate 144. Mg(2+)-binding residues include aspartate 9, glutamate 72, and aspartate 144.

The protein belongs to the RuvC family. As to quaternary structure, homodimer which binds Holliday junction (HJ) DNA. The HJ becomes 2-fold symmetrical on binding to RuvC with unstacked arms; it has a different conformation from HJ DNA in complex with RuvA. In the full resolvosome a probable DNA-RuvA(4)-RuvB(12)-RuvC(2) complex forms which resolves the HJ. Requires Mg(2+) as cofactor.

The protein resides in the cytoplasm. It catalyses the reaction Endonucleolytic cleavage at a junction such as a reciprocal single-stranded crossover between two homologous DNA duplexes (Holliday junction).. The RuvA-RuvB-RuvC complex processes Holliday junction (HJ) DNA during genetic recombination and DNA repair. Endonuclease that resolves HJ intermediates. Cleaves cruciform DNA by making single-stranded nicks across the HJ at symmetrical positions within the homologous arms, yielding a 5'-phosphate and a 3'-hydroxyl group; requires a central core of homology in the junction. The consensus cleavage sequence is 5'-(A/T)TT(C/G)-3'. Cleavage occurs on the 3'-side of the TT dinucleotide at the point of strand exchange. HJ branch migration catalyzed by RuvA-RuvB allows RuvC to scan DNA until it finds its consensus sequence, where it cleaves and resolves the cruciform DNA. This chain is Crossover junction endodeoxyribonuclease RuvC, found in Synechococcus sp. (strain ATCC 27144 / PCC 6301 / SAUG 1402/1) (Anacystis nidulans).